We begin with the raw amino-acid sequence, 451 residues long: Chromosomal replication initiator protein DnaA (451 aa).

The interval 1 to 93 (MENIDDLWNK…HNQEEEALPE (93 aa)) is domain I, interacts with DnaA modulators. A disordered region spans residues 88–108 (EEALPEQTPQTPPEKDVAGQS). Positions 94–113 (QTPQTPPEKDVAGQSTLSQT) are domain II. A domain III, AAA+ region region spans residues 114-330 (MLNDKYTFNT…GALIRVVAYS (217 aa)). Positions 158, 160, 161, and 162 each coordinate ATP. Positions 331–451 (SLINQDMNAD…VQAITEQLRQ (121 aa)) are domain IV, binds dsDNA.

Belongs to the DnaA family. As to quaternary structure, oligomerizes as a right-handed, spiral filament on DNA at oriC.

It is found in the cytoplasm. Plays an essential role in the initiation and regulation of chromosomal replication. ATP-DnaA binds to the origin of replication (oriC) to initiate formation of the DNA replication initiation complex once per cell cycle. Binds the DnaA box (a 9 base pair repeat at the origin) and separates the double-stranded (ds)DNA. Forms a right-handed helical filament on oriC DNA; dsDNA binds to the exterior of the filament while single-stranded (ss)DNA is stabiized in the filament's interior. The ATP-DnaA-oriC complex binds and stabilizes one strand of the AT-rich DNA unwinding element (DUE), permitting loading of DNA polymerase. After initiation quickly degrades to an ADP-DnaA complex that is not apt for DNA replication. Binds acidic phospholipids. In Shouchella clausii (strain KSM-K16) (Alkalihalobacillus clausii), this protein is Chromosomal replication initiator protein DnaA.